We begin with the raw amino-acid sequence, 408 residues long: Arginine biosynthesis bifunctional protein ArgJ (408 aa).

Residues Thr-156, Lys-182, Thr-193, Glu-279, Asn-403, and Ser-408 each coordinate substrate. Thr-193 functions as the Nucleophile in the catalytic mechanism.

Belongs to the ArgJ family. In terms of assembly, heterotetramer of two alpha and two beta chains.

The protein localises to the cytoplasm. The enzyme catalyses N(2)-acetyl-L-ornithine + L-glutamate = N-acetyl-L-glutamate + L-ornithine. It catalyses the reaction L-glutamate + acetyl-CoA = N-acetyl-L-glutamate + CoA + H(+). It participates in amino-acid biosynthesis; L-arginine biosynthesis; L-ornithine and N-acetyl-L-glutamate from L-glutamate and N(2)-acetyl-L-ornithine (cyclic): step 1/1. The protein operates within amino-acid biosynthesis; L-arginine biosynthesis; N(2)-acetyl-L-ornithine from L-glutamate: step 1/4. Its function is as follows. Catalyzes two activities which are involved in the cyclic version of arginine biosynthesis: the synthesis of N-acetylglutamate from glutamate and acetyl-CoA as the acetyl donor, and of ornithine by transacetylation between N(2)-acetylornithine and glutamate. This chain is Arginine biosynthesis bifunctional protein ArgJ, found in Bordetella pertussis (strain Tohama I / ATCC BAA-589 / NCTC 13251).